Consider the following 879-residue polypeptide: Alanine--tRNA ligase (879 aa).

Residues His-566, His-570, Cys-668, and His-672 each contribute to the Zn(2+) site.

This sequence belongs to the class-II aminoacyl-tRNA synthetase family. Zn(2+) is required as a cofactor.

Its subcellular location is the cytoplasm. The catalysed reaction is tRNA(Ala) + L-alanine + ATP = L-alanyl-tRNA(Ala) + AMP + diphosphate. Its function is as follows. Catalyzes the attachment of alanine to tRNA(Ala) in a two-step reaction: alanine is first activated by ATP to form Ala-AMP and then transferred to the acceptor end of tRNA(Ala). Also edits incorrectly charged Ser-tRNA(Ala) and Gly-tRNA(Ala) via its editing domain. This is Alanine--tRNA ligase from Clostridium botulinum (strain Alaska E43 / Type E3).